The following is a 339-amino-acid chain: Methionyl-tRNA formyltransferase (339 aa).

110–113 lines the (6S)-5,6,7,8-tetrahydrofolate pocket; the sequence is SLLP.

Belongs to the Fmt family.

The catalysed reaction is L-methionyl-tRNA(fMet) + (6R)-10-formyltetrahydrofolate = N-formyl-L-methionyl-tRNA(fMet) + (6S)-5,6,7,8-tetrahydrofolate + H(+). Functionally, attaches a formyl group to the free amino group of methionyl-tRNA(fMet). The formyl group appears to play a dual role in the initiator identity of N-formylmethionyl-tRNA by promoting its recognition by IF2 and preventing the misappropriation of this tRNA by the elongation apparatus. This Prochlorococcus marinus (strain SARG / CCMP1375 / SS120) protein is Methionyl-tRNA formyltransferase.